Reading from the N-terminus, the 223-residue chain is MKSIIPPQNLSELLKRANMMAGISLAQIATHRGINVPNNLKRDKGWVGQLIEMELGATAGSKPEQDFLHLGVELKTIPIDNHGKPLETTYVCVAPLTNIEGLTWQNSLVCHKLQRVLWVPVEGERHIPVGERRIGTPTLWEPDPQEQALLQQDWEEIMELIALGKVEKLTARHGEVLQLRPKAANSKAMTHSISEDGSLKMTNPRGFYLKTAFTAMILNKVFG.

Belongs to the MutH family.

The protein localises to the cytoplasm. Its function is as follows. Sequence-specific endonuclease that cleaves unmethylated GATC sequences. It is involved in DNA mismatch repair. In Shewanella oneidensis (strain ATCC 700550 / JCM 31522 / CIP 106686 / LMG 19005 / NCIMB 14063 / MR-1), this protein is DNA mismatch repair protein MutH.